The chain runs to 676 residues: MASPSSLLSWPHRAISLSFQPKNPSPSPATARVSVQDPPPPPSDANPSPGRSSNTSRYVWVNPNSPRAAGLARARAGSGRRARLAAAAAALAACEAGEAPVAAALEAAFPEPPSEQDAVIVLNTTSARPAAVVLALWWFLRNAEVRKEVILYNVALKALRKRRRWSDAEALWEEMLREGVQPDNATFSTVISCARACGMPGKAVEWFEKMPDFGCSPDMLTYSAVIDAYGRAGDAETALRLYDRARAEKWQLDPVICATVIRVHSSSGNFDGALNVFEEMKAAGVKPNLVVYNTVLDAMGRAMRPWVVKTIHRELVSQEAVPNKATYCCLLHAYTRARYGEDAMAVYRVMKDEVMDIDVVLYNMLLSMCADIGYVEEAEEIFRDMKASMDSRSKPDSWSYSSMVTLYSCTGNVAGAEGILNEMVEAGFKPNIFILTSLIRCYGKAGRTDDVVRSFAMLEDLGITPDDRFCGCLLTVAAGTPADELGKVIGCIDRSSAQLGAVVRLLVDAAAPSEPLREAAGELLGGARGVVRMPYCNCLMDLAVNLSQMEKACALLDVALRLGIYSNVQTRTQTQWSLHLRGLSVGAALTTLHVWMSDLYAALQAGDELPPLLGIHTGQGKNTYSYKGLATVFESHLKELDAPFHEAPDKAGWFLTTSVAARHWLETKKSAELVAV.

A chloroplast-targeting transit peptide spans 1-73 (MASPSSLLSW…NSPRAAGLAR (73 aa)). The tract at residues 17–58 (LSFQPKNPSPSPATARVSVQDPPPPPSDANPSPGRSSNTSRY) is disordered. PPR repeat units follow at residues 148 to 182 (EVIL…GVQP), 183 to 217 (DNAT…GCSP), 218 to 252 (DMLT…KWQL), 253 to 287 (DPVI…GVKP), 288 to 322 (NLVV…EAVP), 323 to 353 (NKAT…MKDE), 358 to 388 (DVVL…MKAS), 396 to 430 (DSWS…GFKP), 431 to 465 (NIFI…GITP), and 532 to 566 (RMPY…GIYS). Residues 578-662 (LHLRGLSVGA…WFLTTSVAAR (85 aa)) enclose the Smr domain.

This sequence belongs to the PPR family. P subfamily.

Its subcellular location is the plastid. It localises to the chloroplast. Functionally, involved in translation and accumulation of chloroplast ATP synthase subunits. The protein is Pentatricopeptide repeat-containing protein ATP4 homolog, chloroplastic of Oryza sativa subsp. japonica (Rice).